We begin with the raw amino-acid sequence, 363 residues long: UDP-N-acetylglucosamine--N-acetylmuramyl-(pentapeptide) pyrophosphoryl-undecaprenol N-acetylglucosamine transferase (363 aa).

UDP-N-acetyl-alpha-D-glucosamine-binding positions include 16–18 (TGG), Asn128, Arg167, Ser195, Ile249, 268–273 (ALTVSE), and Gln294.

Belongs to the glycosyltransferase 28 family. MurG subfamily.

Its subcellular location is the cell inner membrane. It catalyses the reaction di-trans,octa-cis-undecaprenyl diphospho-N-acetyl-alpha-D-muramoyl-L-alanyl-D-glutamyl-meso-2,6-diaminopimeloyl-D-alanyl-D-alanine + UDP-N-acetyl-alpha-D-glucosamine = di-trans,octa-cis-undecaprenyl diphospho-[N-acetyl-alpha-D-glucosaminyl-(1-&gt;4)]-N-acetyl-alpha-D-muramoyl-L-alanyl-D-glutamyl-meso-2,6-diaminopimeloyl-D-alanyl-D-alanine + UDP + H(+). It functions in the pathway cell wall biogenesis; peptidoglycan biosynthesis. Its function is as follows. Cell wall formation. Catalyzes the transfer of a GlcNAc subunit on undecaprenyl-pyrophosphoryl-MurNAc-pentapeptide (lipid intermediate I) to form undecaprenyl-pyrophosphoryl-MurNAc-(pentapeptide)GlcNAc (lipid intermediate II). The sequence is that of UDP-N-acetylglucosamine--N-acetylmuramyl-(pentapeptide) pyrophosphoryl-undecaprenol N-acetylglucosamine transferase from Marinobacter nauticus (strain ATCC 700491 / DSM 11845 / VT8) (Marinobacter aquaeolei).